Reading from the N-terminus, the 314-residue chain is Annexin-like protein RJ4 (314 aa).

Annexin repeat units follow at residues phenylalanine 10 to leucine 81, aspartate 82 to threonine 153, lysine 165 to arginine 236, and aspartate 240 to glycine 311. Residues glycine 25, glycine 27, and glutamate 67 each coordinate Ca(2+). Residues isoleucine 253, arginine 255, glycine 257, aspartate 297, and threonine 298 each coordinate Ca(2+).

This sequence belongs to the annexin (TC 1.A.31.1) family. In terms of tissue distribution, predominantly in developing fruit.

In Fragaria ananassa (Strawberry), this protein is Annexin-like protein RJ4.